The primary structure comprises 220 residues: Small ribosomal subunit protein eS1 (220 aa).

This sequence belongs to the eukaryotic ribosomal protein eS1 family.

The protein is Small ribosomal subunit protein eS1 of Methanococcus vannielii (strain ATCC 35089 / DSM 1224 / JCM 13029 / OCM 148 / SB).